We begin with the raw amino-acid sequence, 260 residues long: Serine protease VLSP-1 (260 aa).

Positions Met1–Ala18 are cleaved as a signal peptide. A propeptide spanning residues Gln19–Leu24 is cleaved from the precursor. Residues Val25–Ala251 enclose the Peptidase S1 domain. Intrachain disulfides connect Cys31/Cys165, Cys52/Cys68, Cys100/Cys258, Cys144/Cys212, Cys176/Cys191, and Cys202/Cys227. Asn44 carries an N-linked (GlcNAc...) asparagine glycan. Residue His67 is the Charge relay system of the active site. Asn103 carries an N-linked (GlcNAc...) asparagine glycan. Asp112 serves as the catalytic Charge relay system. Residue Asn156 is glycosylated (N-linked (GlcNAc...) asparagine). The active-site Charge relay system is the Ser206.

Belongs to the peptidase S1 family. Snake venom subfamily. In terms of tissue distribution, expressed by the venom gland.

Its subcellular location is the secreted. Snake venom serine protease that may act in the hemostasis system of the prey. The polypeptide is Serine protease VLSP-1 (Macrovipera lebetinus (Levantine viper)).